We begin with the raw amino-acid sequence, 270 residues long: Phosphatidylglycerol--prolipoprotein diacylglyceryl transferase (270 aa).

The next 4 helical transmembrane spans lie at 19–39, 56–76, 92–112, and 116–136; these read FPVYWYGIIIGTGVLLGLWLA, LVLIAVPIAILFARMYYVIFE, QGGLAIHGGLIGAVITGILFA, and GVSFWKLADIAAPSILLGQAI. Arg-138 lines the a 1,2-diacyl-sn-glycero-3-phospho-(1'-sn-glycerol) pocket. Transmembrane regions (helical) follow at residues 178–198, 206–226, and 236–256; these read HPTFLYESLWNFAGVILLLAL, GELFFTYLIWYSVGRFFVEGL, and LRIAQVMSIGLVVISIIFIIV.

The protein belongs to the Lgt family.

It localises to the cell membrane. It catalyses the reaction L-cysteinyl-[prolipoprotein] + a 1,2-diacyl-sn-glycero-3-phospho-(1'-sn-glycerol) = an S-1,2-diacyl-sn-glyceryl-L-cysteinyl-[prolipoprotein] + sn-glycerol 1-phosphate + H(+). Its pathway is protein modification; lipoprotein biosynthesis (diacylglyceryl transfer). Catalyzes the transfer of the diacylglyceryl group from phosphatidylglycerol to the sulfhydryl group of the N-terminal cysteine of a prolipoprotein, the first step in the formation of mature lipoproteins. This Bacillus cereus (strain Q1) protein is Phosphatidylglycerol--prolipoprotein diacylglyceryl transferase.